Reading from the N-terminus, the 357-residue chain is Heme A synthase (357 aa).

A run of 5 helical transmembrane segments spans residues 24–44 (LVRYWLYAVFVVLIAIVMVGG), 110–130 (MLARFVGFLVAVPLAFFWVTG), 140–160 (MLGLLALGGLQGAIGWWMVAS), 175–195 (IHLTTACIIITAVFYIARGLV), and 209–229 (FAGWIVFAVLVQIYLGGLVAG). Heme is bound at residue His272. 3 consecutive transmembrane segments (helical) span residues 274 to 294 (MFAYTVLVLTVLHSLQVWKQV), 303 to 323 (TIVLVGLVLIQAVIGIATLLM), and 325 to 345 (VPLHLGLTHQFFALIVLAFAV). A heme-binding site is contributed by His333.

Belongs to the COX15/CtaA family. Type 2 subfamily. As to quaternary structure, interacts with CtaB. Heme b serves as cofactor.

The protein localises to the cell membrane. It carries out the reaction Fe(II)-heme o + 2 A + H2O = Fe(II)-heme a + 2 AH2. The protein operates within porphyrin-containing compound metabolism; heme A biosynthesis; heme A from heme O: step 1/1. Its function is as follows. Catalyzes the conversion of heme O to heme A by two successive hydroxylations of the methyl group at C8. The first hydroxylation forms heme I, the second hydroxylation results in an unstable dihydroxymethyl group, which spontaneously dehydrates, resulting in the formyl group of heme A. This chain is Heme A synthase, found in Brucella anthropi (strain ATCC 49188 / DSM 6882 / CCUG 24695 / JCM 21032 / LMG 3331 / NBRC 15819 / NCTC 12168 / Alc 37) (Ochrobactrum anthropi).